The primary structure comprises 273 residues: Putative pyruvate, phosphate dikinase regulatory protein 2 (273 aa).

An ADP-binding site is contributed by 151-158; that stretch reads GISRTSKT.

The protein belongs to the pyruvate, phosphate/water dikinase regulatory protein family. PDRP subfamily.

The enzyme catalyses N(tele)-phospho-L-histidyl/L-threonyl-[pyruvate, phosphate dikinase] + ADP = N(tele)-phospho-L-histidyl/O-phospho-L-threonyl-[pyruvate, phosphate dikinase] + AMP + H(+). It carries out the reaction N(tele)-phospho-L-histidyl/O-phospho-L-threonyl-[pyruvate, phosphate dikinase] + phosphate + H(+) = N(tele)-phospho-L-histidyl/L-threonyl-[pyruvate, phosphate dikinase] + diphosphate. Bifunctional serine/threonine kinase and phosphorylase involved in the regulation of the pyruvate, phosphate dikinase (PPDK) by catalyzing its phosphorylation/dephosphorylation. This is Putative pyruvate, phosphate dikinase regulatory protein 2 from Staphylococcus saprophyticus subsp. saprophyticus (strain ATCC 15305 / DSM 20229 / NCIMB 8711 / NCTC 7292 / S-41).